The sequence spans 429 residues: G2/mitotic-specific cyclin-B1 (429 aa).

Polar residues predominate over residues 1–14 (MALRVTRNTKLNTE). Disordered stretches follow at residues 1–21 (MALR…KVSM) and 71–128 (TGKV…PMET). Position 73 is an N6-acetyllysine (lysine 73). Positions 92-106 (PEVELAEPEPEPEPV) are enriched in acidic residues. Position 122 is a phosphoserine; by CDK1 (serine 122). Residue serine 124 is modified to Phosphoserine. Phosphoserine; by PLK1 is present on serine 129. Phosphoserine is present on serine 143. Interaction with CDK2 stretches follow at residues 165–173 (EYVKDIYAY) and 254–257 (YEEM). Threonine 317 is modified (phosphothreonine).

It belongs to the cyclin family. Cyclin AB subfamily. As to quaternary structure, interacts with the CDC2 protein kinase to form a serine/threonine kinase holoenzyme complex also known as maturation promoting factor (MPF). The cyclin subunit imparts substrate specificity to the complex. Binds HEI10. Interacts with catalytically active RALBP1 and CDC2 during mitosis to form an endocytotic complex during interphase. Interacts with CCNF; interaction is required for nuclear localization. Interacts with CDK5RAP3. Interacts with RFPL4A and UBE2A. Interacts with INCA1. Ubiquitinated by the SCF(NIPA) complex during interphase, leading to its destruction. Not ubiquitinated during G2/M phases. In terms of processing, phosphorylated by PLK1 at Ser-129 on centrosomes during prophase: phosphorylation by PLK1 does not cause nuclear import. Phosphorylation at Ser-143 was also reported to be mediated by PLK1 but Ser-129 seems to be the primary phosphorylation site.

It localises to the cytoplasm. The protein localises to the nucleus. The protein resides in the cytoskeleton. It is found in the microtubule organizing center. Its subcellular location is the centrosome. Functionally, essential for the control of the cell cycle at the G2/M (mitosis) transition. The protein is G2/mitotic-specific cyclin-B1 (CCNB1) of Cricetulus griseus (Chinese hamster).